The sequence spans 124 residues: Protein MGF 110-4L-B (124 aa).

The N-terminal stretch at M1 to G18 is a signal peptide. N-linked (GlcNAc...) asparagine; by host glycosylation occurs at N64. Positions K121 to L124 match the Prevents secretion from ER motif.

This sequence belongs to the asfivirus MGF 110 family.

It is found in the virion. The protein localises to the host endoplasmic reticulum-Golgi intermediate compartment. Functionally, causes the redistribution of lumenal ER protein to an enlarged ERGIC compartment. In African swine fever virus (isolate Portugal/Lis 57/1957) (ASFV), this protein is Protein MGF 110-4L-B.